Consider the following 544-residue polypeptide: Formate--tetrahydrofolate ligase (544 aa).

63-70 (TPAGEGKS) is a binding site for ATP.

It belongs to the formate--tetrahydrofolate ligase family.

The catalysed reaction is (6S)-5,6,7,8-tetrahydrofolate + formate + ATP = (6R)-10-formyltetrahydrofolate + ADP + phosphate. It participates in one-carbon metabolism; tetrahydrofolate interconversion. The chain is Formate--tetrahydrofolate ligase from Fusobacterium nucleatum subsp. nucleatum (strain ATCC 25586 / DSM 15643 / BCRC 10681 / CIP 101130 / JCM 8532 / KCTC 2640 / LMG 13131 / VPI 4355).